Reading from the N-terminus, the 300-residue chain is Tyrosine recombinase XerD (300 aa).

Positions 5–90 (YQCDPLIDAF…SLRRFYNYLL (86 aa)) constitute a Core-binding (CB) domain. In terms of domain architecture, Tyr recombinase spans 111–294 (HLPDSLSESQ…ARARLQELHQ (184 aa)). Active-site residues include Arg151, Lys175, His246, Arg249, and His272. The O-(3'-phospho-DNA)-tyrosine intermediate role is filled by Tyr281.

It belongs to the 'phage' integrase family. XerD subfamily. As to quaternary structure, forms a cyclic heterotetrameric complex composed of two molecules of XerC and two molecules of XerD.

The protein localises to the cytoplasm. Its function is as follows. Site-specific tyrosine recombinase, which acts by catalyzing the cutting and rejoining of the recombining DNA molecules. The XerC-XerD complex is essential to convert dimers of the bacterial chromosome into monomers to permit their segregation at cell division. It also contributes to the segregational stability of plasmids. The protein is Tyrosine recombinase XerD of Shewanella oneidensis (strain ATCC 700550 / JCM 31522 / CIP 106686 / LMG 19005 / NCIMB 14063 / MR-1).